The sequence spans 332 residues: MTLEIKTSNVEPIRQNYAYIERRFGSKPATRYQEVSFDVQAETNFHYRPLWKPEKTLNDKTHTALQMQDWYAFKDPRQFYYGTYVQHRARLQDTAESNFAFFEKRQLAEHLSNEVKAKVIECLLPFRHVEQTANLHMMSGSAYGYGTVLTQACIYAAMDHLGIAQYISRIGLALDGNSGDSLQQAKQAWMQHPAWQGLRRLCEESLTEQDYFKLFLLQNLVIDGFVTELVYQQFDQWLVSQNARDLAMLTEFMKDTLGDLRKWSDTVIKTAAAESDHNKQLLNEWFTESLAQVKAAFTPWATAALTVDAVDQAEQAVIERAKKLGLQPLTNA.

It belongs to the TmoE/XamoE family.

It catalyses the reaction phenol + NADH + O2 + H(+) = catechol + NAD(+) + H2O. Its pathway is aromatic compound metabolism; phenol degradation. In terms of biological role, part of a multicomponent enzyme which catalyzes the degradation of phenol and some of its methylated derivatives. The protein is Phenol 2-monooxygenase, oxygenase component MhpL (mphL) of Acinetobacter pittii (strain PHEA-2).